Reading from the N-terminus, the 253-residue chain is Triosephosphate isomerase (253 aa).

A substrate-binding site is contributed by 8 to 10 (NWK). Residue histidine 93 is the Electrophile of the active site. The Proton acceptor role is filled by glutamate 165. Substrate contacts are provided by residues glycine 171, serine 210, and 231–232 (GG).

This sequence belongs to the triosephosphate isomerase family. As to quaternary structure, homodimer.

The protein localises to the cytoplasm. It carries out the reaction D-glyceraldehyde 3-phosphate = dihydroxyacetone phosphate. It functions in the pathway carbohydrate biosynthesis; gluconeogenesis. It participates in carbohydrate degradation; glycolysis; D-glyceraldehyde 3-phosphate from glycerone phosphate: step 1/1. Involved in the gluconeogenesis. Catalyzes stereospecifically the conversion of dihydroxyacetone phosphate (DHAP) to D-glyceraldehyde-3-phosphate (G3P). In Francisella tularensis subsp. novicida (strain U112), this protein is Triosephosphate isomerase.